A 502-amino-acid polypeptide reads, in one-letter code: ATP synthase subunit alpha (502 aa).

Residue 169–176 (GDRQTGKT) coordinates ATP.

It belongs to the ATPase alpha/beta chains family. F-type ATPases have 2 components, CF(1) - the catalytic core - and CF(0) - the membrane proton channel. CF(1) has five subunits: alpha(3), beta(3), gamma(1), delta(1), epsilon(1). CF(0) has three main subunits: a(1), b(2) and c(9-12). The alpha and beta chains form an alternating ring which encloses part of the gamma chain. CF(1) is attached to CF(0) by a central stalk formed by the gamma and epsilon chains, while a peripheral stalk is formed by the delta and b chains.

Its subcellular location is the cell inner membrane. The catalysed reaction is ATP + H2O + 4 H(+)(in) = ADP + phosphate + 5 H(+)(out). Its function is as follows. Produces ATP from ADP in the presence of a proton gradient across the membrane. The alpha chain is a regulatory subunit. In Geobacter sp. (strain M21), this protein is ATP synthase subunit alpha.